We begin with the raw amino-acid sequence, 1018 residues long: DNA polymerase gamma (1018 aa).

This sequence belongs to the DNA polymerase type-A family. Requires Mg(2+) as cofactor.

The protein localises to the mitochondrion. The catalysed reaction is DNA(n) + a 2'-deoxyribonucleoside 5'-triphosphate = DNA(n+1) + diphosphate. In terms of biological role, involved in the replication of mitochondrial DNA. In Schizosaccharomyces pombe (strain 972 / ATCC 24843) (Fission yeast), this protein is DNA polymerase gamma (mip1).